The primary structure comprises 615 residues: DNA mismatch repair protein MutL (615 aa).

Residues 362-397 (HFAEPAVREPVAPRYSPAPASGGRPAASWPNAQPGY) form a disordered region. Positions 378–391 (PAPASGGRPAASWP) are enriched in low complexity.

This sequence belongs to the DNA mismatch repair MutL/HexB family.

Its function is as follows. This protein is involved in the repair of mismatches in DNA. It is required for dam-dependent methyl-directed DNA mismatch repair. May act as a 'molecular matchmaker', a protein that promotes the formation of a stable complex between two or more DNA-binding proteins in an ATP-dependent manner without itself being part of a final effector complex. The polypeptide is DNA mismatch repair protein MutL (Escherichia fergusonii (strain ATCC 35469 / DSM 13698 / CCUG 18766 / IAM 14443 / JCM 21226 / LMG 7866 / NBRC 102419 / NCTC 12128 / CDC 0568-73)).